Consider the following 463-residue polypeptide: 23S rRNA (uracil(1939)-C(5))-methyltransferase RlmD (463 aa).

Residues 8 to 76 enclose the TRAM domain; that stretch reads RSKSATVYTF…KRFEEGELIE (69 aa). Residues C90, C96, C99, and C178 each contribute to the [4Fe-4S] cluster site. Residues Q288, F317, N322, E341, D368, and D389 each coordinate S-adenosyl-L-methionine. C415 serves as the catalytic Nucleophile.

Belongs to the class I-like SAM-binding methyltransferase superfamily. RNA M5U methyltransferase family. RlmD subfamily.

The enzyme catalyses uridine(1939) in 23S rRNA + S-adenosyl-L-methionine = 5-methyluridine(1939) in 23S rRNA + S-adenosyl-L-homocysteine + H(+). Its function is as follows. Catalyzes the formation of 5-methyl-uridine at position 1939 (m5U1939) in 23S rRNA. In Acinetobacter baylyi (strain ATCC 33305 / BD413 / ADP1), this protein is 23S rRNA (uracil(1939)-C(5))-methyltransferase RlmD.